The sequence spans 323 residues: Acetyl esterase (323 aa).

Positions 91 to 93 (HGG) match the Involved in the stabilization of the negatively charged intermediate by the formation of the oxyanion hole motif. Active-site residues include Ser-165, Asp-262, and His-292.

The protein belongs to the 'GDXG' lipolytic enzyme family. As to quaternary structure, homodimer. Interacts with MalT and MelA.

The protein localises to the cytoplasm. Its function is as follows. Displays esterase activity towards short chain fatty esters (acyl chain length of up to 8 carbons). Able to hydrolyze triacetylglycerol (triacetin) and tributyrylglycerol (tributyrin), but not trioleylglycerol (triolein) or cholesterol oleate. Negatively regulates MalT activity by antagonizing maltotriose binding. Inhibits MelA galactosidase activity. The protein is Acetyl esterase of Salmonella typhi.